Reading from the N-terminus, the 626-residue chain is Chaperone protein DnaK (626 aa).

Threonine 175 is subject to Phosphothreonine; by autocatalysis. 3 disordered regions span residues 469 to 488 (DKGT…GLPK), 498 to 517 (AEAH…TRNQ), and 583 to 626 (AQQG…KDNK). Positions 498-516 (AEAHEAEDKKRKEDAETRN) are enriched in basic and acidic residues. The span at 609 to 626 (SDDDVVDAEVVDDDKDNK) shows a compositional bias: acidic residues.

It belongs to the heat shock protein 70 family.

Its function is as follows. Acts as a chaperone. This is Chaperone protein DnaK from Bifidobacterium adolescentis (strain ATCC 15703 / DSM 20083 / NCTC 11814 / E194a).